The chain runs to 315 residues: Prephenate dehydratase (315 aa).

The Prephenate dehydratase domain maps to 7-190; the sequence is VVAYLGPAGT…ARTRFVAVQA (184 aa). Residues 204–283 form the ACT domain; that stretch reads SVIFSLPNVP…LVFVGSWPSN (80 aa).

The catalysed reaction is prephenate + H(+) = 3-phenylpyruvate + CO2 + H2O. Its pathway is amino-acid biosynthesis; L-phenylalanine biosynthesis; phenylpyruvate from prephenate: step 1/1. This chain is Prephenate dehydratase (pheA), found in Corynebacterium glutamicum (strain ATCC 13032 / DSM 20300 / JCM 1318 / BCRC 11384 / CCUG 27702 / LMG 3730 / NBRC 12168 / NCIMB 10025 / NRRL B-2784 / 534).